A 453-amino-acid polypeptide reads, in one-letter code: Na(+)/H(+) antiporter NhaA 2 (453 aa).

A run of 12 helical transmembrane segments spans residues 23 to 43, 74 to 94, 111 to 131, 139 to 159, 168 to 188, 191 to 211, 214 to 234, 235 to 255, 316 to 336, 345 to 365, 386 to 406, and 419 to 439; these read FLHIEAVSGIVLLIAAVAALI, LHFWINDGLMTIFFLVVGMEI, LPMAAAVGGVAVPALLYLSFG, GWAVPTATDIAFAVGVLALLG, VFLLALAIIDDIIAVLIIAFF, GGLDYTGFGVAVIGLLMVIGL, IGVGSAYAYVIPGAIVWLGIL, LTGAHPTLAGVVLGLMTPVTA, VAFGIMPVFALANAGVSLSGV, WVMIAVAVALVAGKPLGIVSV, IMLVGLLAGIGFTMSIFIANL, and LGVLSASLIAAVLGLTWGVWS.

The protein belongs to the NhaA Na(+)/H(+) (TC 2.A.33) antiporter family.

The protein localises to the cell inner membrane. It carries out the reaction Na(+)(in) + 2 H(+)(out) = Na(+)(out) + 2 H(+)(in). Functionally, na(+)/H(+) antiporter that extrudes sodium in exchange for external protons. The chain is Na(+)/H(+) antiporter NhaA 2 from Pseudomonas putida (strain ATCC 47054 / DSM 6125 / CFBP 8728 / NCIMB 11950 / KT2440).